Reading from the N-terminus, the 265-residue chain is MASSSRSVLLLVAALFAVFLGSAHGIAKVPPGPNITATYGDEWLDAKSTWYGKPTGAGPKDNGGACGYKDVDKPPFSGMTGCGNTPIFKDGRGCGSCFEIKCTKPESCSGEPVTVHITDDNEEPIAPYHFDLSGHAFGSMAKKGEEQKLRSAGELELKFRRVKCKYPDGTKPTFHVEKGSNPNYLALLVKYIDGDGDVVAVDIKEKGKDKWIELKESWGAVWRVDTPDKLTGPFTVRYTTEGGTKGEAEDVIPEGWKADTAYEAK.

A signal peptide spans 1 to 25; it reads MASSSRSVLLLVAALFAVFLGSAHG. Asparagine 34 is a glycosylation site (N-linked (GlcNAc...) asparagine). The Expansin-like EG45 domain maps to 63–169; it reads GGACGYKDVD…RRVKCKYPDG (107 aa). The 82-residue stretch at 183–264 folds into the Expansin-like CBD domain; that stretch reads NYLALLVKYI…GWKADTAYEA (82 aa).

It belongs to the expansin family. Expansin B subfamily.

The protein localises to the secreted. This chain is Major pollen allergen Hol l 1, found in Holcus lanatus (Yorkshire-fog).